The following is a 660-amino-acid chain: Bifunctional polymyxin resistance protein ArnA (660 aa).

Residues M1 to L304 form a formyltransferase ArnAFT region. H86 to I88 is a binding site for (6R)-10-formyltetrahydrofolate. The active-site Proton donor; for formyltransferase activity is H104. (6R)-10-formyltetrahydrofolate is bound by residues R114 and V136–D140. A dehydrogenase ArnADH region spans residues R314–S660. NAD(+) contacts are provided by residues D347 and D368–I369. UDP-alpha-D-glucuronate is bound by residues A393, Y398, and T432–S433. Catalysis depends on E434, which acts as the Proton acceptor; for decarboxylase activity. UDP-alpha-D-glucuronate is bound by residues R460, N492, K526–R535, and Y613. R619 serves as the catalytic Proton donor; for decarboxylase activity.

In the N-terminal section; belongs to the Fmt family. UDP-L-Ara4N formyltransferase subfamily. It in the C-terminal section; belongs to the NAD(P)-dependent epimerase/dehydratase family. UDP-glucuronic acid decarboxylase subfamily. Homohexamer, formed by a dimer of trimers.

The catalysed reaction is UDP-alpha-D-glucuronate + NAD(+) = UDP-beta-L-threo-pentopyranos-4-ulose + CO2 + NADH. It catalyses the reaction UDP-4-amino-4-deoxy-beta-L-arabinose + (6R)-10-formyltetrahydrofolate = UDP-4-deoxy-4-formamido-beta-L-arabinose + (6S)-5,6,7,8-tetrahydrofolate + H(+). It functions in the pathway nucleotide-sugar biosynthesis; UDP-4-deoxy-4-formamido-beta-L-arabinose biosynthesis; UDP-4-deoxy-4-formamido-beta-L-arabinose from UDP-alpha-D-glucuronate: step 1/3. It participates in nucleotide-sugar biosynthesis; UDP-4-deoxy-4-formamido-beta-L-arabinose biosynthesis; UDP-4-deoxy-4-formamido-beta-L-arabinose from UDP-alpha-D-glucuronate: step 3/3. The protein operates within bacterial outer membrane biogenesis; lipopolysaccharide biosynthesis. Functionally, bifunctional enzyme that catalyzes the oxidative decarboxylation of UDP-glucuronic acid (UDP-GlcUA) to UDP-4-keto-arabinose (UDP-Ara4O) and the addition of a formyl group to UDP-4-amino-4-deoxy-L-arabinose (UDP-L-Ara4N) to form UDP-L-4-formamido-arabinose (UDP-L-Ara4FN). The modified arabinose is attached to lipid A and is required for resistance to polymyxin and cationic antimicrobial peptides. In Shigella sonnei (strain Ss046), this protein is Bifunctional polymyxin resistance protein ArnA.